The primary structure comprises 77 residues: Protein UL148C (77 aa).

Transmembrane regions (helical) follow at residues 10-30 and 35-55; these read VLYLLALVVWVEMFCLVAVAV and IAWALLLRMLVVGLMVEVGAA.

It localises to the host membrane. The chain is Protein UL148C (UL148C) from Homo sapiens (Human).